The following is a 472-amino-acid chain: Serine incorporator 3 (472 aa).

At 1 to 96 (MGAVLGVFSL…KDCDVLVGFK (96 aa)) the chain is on the extracellular side. Residue asparagine 34 is glycosylated (N-linked (GlcNAc...) asparagine). A helical transmembrane segment spans residues 97–117 (AVYRINFAVAIFFFAFFLLML). Residues 118-132 (KVKTSKDPRAAVHNG) lie on the Cytoplasmic side of the membrane. Residues 133 to 153 (FWFFKIAAIIGIMIGSFYIPG) traverse the membrane as a helical segment. Topologically, residues 154 to 158 (GSFTE) are extracellular. Residues 159-179 (VWFVAGMLGASFFIIIQLVLL) traverse the membrane as a helical segment. At 180–206 (VDMAHSWNELWVNRMEEGNPRLWYAAL) the chain is on the cytoplasmic side. Residues 207-227 (LSFTSLFYILSIVFAALLYVF) traverse the membrane as a helical segment. The Extracellular segment spans residues 228 to 238 (YTKPDDCTENK). A helical transmembrane segment spans residues 239 to 259 (VFISLNLIFCVAVSIVSILPK). Residues 260–329 (VQEHQPRSGL…APAYAPPSQS (70 aa)) lie on the Cytoplasmic side of the membrane. A helical transmembrane segment spans residues 330–350 (GHFMNLDDIWGLIIFVFCLIY). The Extracellular portion of the chain corresponds to 351–405 (SSFRTSSNSQVNKLTLSGSDSVILGDTTNGANDEEDGQPRRAVDNEKEGVQYSYS). Serine 371 is subject to Phosphoserine. The helical transmembrane segment at 406 to 426 (FFHLMLCCASLYIMMTITSWY) threads the bilayer. Residues 427 to 445 (SPDAKFQKVSSKWLAVWFK) are Cytoplasmic-facing. The helical transmembrane segment at 446–466 (MGSSWLCLLLYLWTLVAPLVL) threads the bilayer. At 467-472 (TGRDFS) the chain is on the extracellular side.

The protein belongs to the TDE1 family. N-glycosylated. As to expression, highly expressed in the neuronal populations such as Purkinje cells in the cerebellum, brainstem and spinal motor neurons, locus coeruleus and raphe nuclei. Highly expressed also in thymus, kidney liver and testis.

It is found in the cell membrane. It localises to the golgi apparatus membrane. The catalysed reaction is a 1,2-diacyl-sn-glycero-3-phospho-L-serine(in) = a 1,2-diacyl-sn-glycero-3-phospho-L-serine(out). The enzyme catalyses a 1,2-diacyl-sn-glycero-3-phosphocholine(in) = a 1,2-diacyl-sn-glycero-3-phosphocholine(out). It carries out the reaction a 1,2-diacyl-sn-glycero-3-phosphoethanolamine(in) = a 1,2-diacyl-sn-glycero-3-phosphoethanolamine(out). Functionally, restriction factor required to restrict infectivity of gammaretroviruses: acts by inhibiting an early step of viral infection. Impairs the penetration of the viral particle into the cytoplasm. Non-ATP-dependent, non-specific lipid transporter for phosphatidylserine, phosphatidylcholine, and phosphatidylethanolamine. Functions as a scramblase that flips lipids in both directions across the membrane. Phospholipid scrambling results in gammaretroviral surface exposure of phosphatidylserine and loss of membrane asymmetry, which leads to loss of infectivity. This chain is Serine incorporator 3 (Serinc3), found in Mus musculus (Mouse).